The primary structure comprises 155 residues: Small ribosomal subunit protein uS7cz/uS7cy (155 aa).

The protein belongs to the universal ribosomal protein uS7 family. Part of the 30S ribosomal subunit.

It localises to the plastid. The protein localises to the chloroplast. One of the primary rRNA binding proteins, it binds directly to 16S rRNA where it nucleates assembly of the head domain of the 30S subunit. This chain is Small ribosomal subunit protein uS7cz/uS7cy (rps7-A), found in Lemna minor (Common duckweed).